The following is a 148-amino-acid chain: UPF0756 membrane protein ESA_02180 (148 aa).

4 consecutive transmembrane segments (helical) span residues 4 to 24 (ITLLILLALAGLGFVSHNMAV), 51 to 71 (VTVGIIILTISVMAPIASGTL), 86 to 106 (LVAIAVGVFVSWLGGKGVALM), and 112 to 132 (IVAGLLVGTVLGVALFRGVPV).

It belongs to the UPF0756 family.

It localises to the cell membrane. This is UPF0756 membrane protein ESA_02180 from Cronobacter sakazakii (strain ATCC BAA-894) (Enterobacter sakazakii).